Consider the following 177-residue polypeptide: 2''-aminoglycoside nucleotidyltransferase (177 aa).

Residues 1–92 (MDTTQVTLIH…ELLDCEPAWW (92 aa)) are N-terminal domain. 3 residues coordinate Mg(2+): Asp-44, Asp-46, and Asp-86. Asp-86 (proton acceptor) is an active-site residue. A C-terminal domain region spans residues 93–177 (ADEAYEIAEA…RAAFRSRYAA (85 aa)). Position 100 (Ala-100) interacts with kanamycin A.

In terms of assembly, monomer. Requires Mg(2+) as cofactor.

It catalyses the reaction nucleoside triphosphate + gentamicin = diphosphate + 2''-nucleotidylgentamicin.. Its function is as follows. Mediates bacterial resistance to kanamycin, gentamicin, dibekacin, sisomicin and tobramycin by adenylating the 2''-hydroxyl group of these antibiotics. This is 2''-aminoglycoside nucleotidyltransferase from Klebsiella pneumoniae.